Here is a 513-residue protein sequence, read N- to C-terminus: ATP synthase subunit alpha (513 aa).

Position 169-176 (Gly-169–Thr-176) interacts with ATP.

This sequence belongs to the ATPase alpha/beta chains family. As to quaternary structure, F-type ATPases have 2 components, CF(1) - the catalytic core - and CF(0) - the membrane proton channel. CF(1) has five subunits: alpha(3), beta(3), gamma(1), delta(1), epsilon(1). CF(0) has three main subunits: a(1), b(2) and c(9-12). The alpha and beta chains form an alternating ring which encloses part of the gamma chain. CF(1) is attached to CF(0) by a central stalk formed by the gamma and epsilon chains, while a peripheral stalk is formed by the delta and b chains.

The protein resides in the cell inner membrane. The enzyme catalyses ATP + H2O + 4 H(+)(in) = ADP + phosphate + 5 H(+)(out). Its function is as follows. Produces ATP from ADP in the presence of a proton gradient across the membrane. The alpha chain is a regulatory subunit. The chain is ATP synthase subunit alpha from Actinobacillus pleuropneumoniae serotype 7 (strain AP76).